Reading from the N-terminus, the 482-residue chain is MKICFVASECEPLVKVGGLGDVVQSLAKELVNLGHQVSVILPFYKSIKAQNVQFITQHTLNLGGVYYDFHIYKTNLDNVDIFLIDQKTFFGREYVYGTPKGPYEDNYLRFAFFSLASLETLSHVCHIPDIIHIHDWHTALVAVYKDLYFKHLDETATVLTIHNIAFQGIFLGHILPQIGIPWGLFNPEDLEFYNQVNFLKGGIVHSDVITTVSKTHAKEIQTNMGFGLEGVLREKRYVFGILNGIDTESWNPATDKSLYQNYDINTFKAGKEKNKMYVKELFGLETPHTRPLAAFIARLAKQKGLDLIEKAVDDAVKIGYDFIFLGSGDYYYQGKVLDMVKRNMGYVAARIEYNDILSRKLYAGADMFLMPSEYEPCGIGQMIAMRYGAIPIVHKTGGLADTVVDYNEDNEHGTGFSFEDYTYKDFLYTMARAMIVYQKKYIPEDNEWYNIVSNAMAQDFSWRRSVQEYIKIYKTAKLIKMH.

Lys15 is a binding site for ADP-alpha-D-glucose.

This sequence belongs to the glycosyltransferase 1 family. Bacterial/plant glycogen synthase subfamily.

The enzyme catalyses [(1-&gt;4)-alpha-D-glucosyl](n) + ADP-alpha-D-glucose = [(1-&gt;4)-alpha-D-glucosyl](n+1) + ADP + H(+). It participates in glycan biosynthesis; glycogen biosynthesis. In terms of biological role, synthesizes alpha-1,4-glucan chains using ADP-glucose. The chain is Glycogen synthase from Hydrogenobaculum sp. (strain Y04AAS1).